The primary structure comprises 308 residues: Porphobilinogen deaminase (308 aa).

C241 carries the S-(dipyrrolylmethanemethyl)cysteine modification.

This sequence belongs to the HMBS family. As to quaternary structure, monomer. It depends on dipyrromethane as a cofactor.

The catalysed reaction is 4 porphobilinogen + H2O = hydroxymethylbilane + 4 NH4(+). Its pathway is porphyrin-containing compound metabolism; protoporphyrin-IX biosynthesis; coproporphyrinogen-III from 5-aminolevulinate: step 2/4. Tetrapolymerization of the monopyrrole PBG into the hydroxymethylbilane pre-uroporphyrinogen in several discrete steps. The polypeptide is Porphobilinogen deaminase (Staphylococcus aureus (strain Mu50 / ATCC 700699)).